Here is a 653-residue protein sequence, read N- to C-terminus: Exocyst complex component EXO70C1 (653 aa).

Basic and acidic residues-rich tracts occupy residues 1–34, 159–177, and 438–451; these read MEKSGNHHHANESSENHDHKSEDHENKQHSDELH, SREEEKKNNNNNNHHDGSN, and NKPEPETKPRQQQR. 3 disordered regions span residues 1-50, 159-190, and 432-456; these read MEKS…HSLV, SREEEKKNNNNNNHHDGSNSDHNNSSTNDSDR, and EANQTDNKPEPETKPRQQQREDDEE.

Belongs to the EXO70 family. In terms of assembly, interacts with ROH1A. Binds directly to B1L. Phosphorylated. Expressed in anthers, pollen and root trichoblast cells.

Its subcellular location is the cytoplasm. Required for global plant growth and for male transmission. Involved in the regulation of tip growth of pollen tube. The chain is Exocyst complex component EXO70C1 from Arabidopsis thaliana (Mouse-ear cress).